The following is a 460-amino-acid chain: ATP synthase subunit beta (460 aa).

An ATP-binding site is contributed by 150-157 (GGAGVGKT).

The protein belongs to the ATPase alpha/beta chains family. As to quaternary structure, F-type ATPases have 2 components, CF(1) - the catalytic core - and CF(0) - the membrane proton channel. CF(1) has five subunits: alpha(3), beta(3), gamma(1), delta(1), epsilon(1). CF(0) has three main subunits: a(1), b(2) and c(9-12). The alpha and beta chains form an alternating ring which encloses part of the gamma chain. CF(1) is attached to CF(0) by a central stalk formed by the gamma and epsilon chains, while a peripheral stalk is formed by the delta and b chains.

It is found in the cell inner membrane. The enzyme catalyses ATP + H2O + 4 H(+)(in) = ADP + phosphate + 5 H(+)(out). In terms of biological role, produces ATP from ADP in the presence of a proton gradient across the membrane. The catalytic sites are hosted primarily by the beta subunits. The protein is ATP synthase subunit beta of Yersinia enterocolitica serotype O:8 / biotype 1B (strain NCTC 13174 / 8081).